A 520-amino-acid polypeptide reads, in one-letter code: Kelch domain-containing protein 4 (520 aa).

A compositionally biased stretch (basic residues) spans 1-10 (MGKKGKKEKK). The tract at residues 1–33 (MGKKGKKEKKGRGAEKTAAKMEKKVSKRSRKEE) is disordered. Basic and acidic residues predominate over residues 11–24 (GRGAEKTAAKMEKK). Kelch repeat units follow at residues 77 to 129 (ELIL…VVPQ), 133 to 187 (QLWV…AWKR), 188 to 241 (QLIL…VTPQ), 243 to 289 (GIVV…MNPS), and 308 to 361 (QTLF…RRGR). 3 disordered regions span residues 346–379 (QLKGPKSEKKKRRRGRKEEPEGGSRPACGGAGTQ), 402–431 (LTAPGSAGQPRSEDEDSLEEAGSPAPGPCP), and 481–520 (DPETQEWLEETDSEEDSEEVEGAEGGVDDEDSGEESGAED). Residues Ser413 and Ser418 each carry the phosphoserine modification. Residues 443–494 (VLYVYGGMFEAGDRQVTLSDLHCLDLHRMEAWKALVEMDPETQEWLEETDSE) form a Kelch 6 repeat.

In Homo sapiens (Human), this protein is Kelch domain-containing protein 4 (KLHDC4).